The primary structure comprises 138 residues: Putative pre-16S rRNA nuclease (138 aa).

It belongs to the YqgF nuclease family.

The protein resides in the cytoplasm. Functionally, could be a nuclease involved in processing of the 5'-end of pre-16S rRNA. This chain is Putative pre-16S rRNA nuclease, found in Enterobacter sp. (strain 638).